The primary structure comprises 135 residues: Protein PsiE homolog (135 aa).

The next 4 membrane-spanning stretches (helical) occupy residues Val-13–Leu-33, Tyr-54–Val-74, His-82–Val-102, and Pro-107–Ala-127.

Belongs to the PsiE family.

The protein localises to the cell inner membrane. This Edwardsiella ictaluri (strain 93-146) protein is Protein PsiE homolog.